The primary structure comprises 282 residues: MLKDFFSKKKRYATIPSERAKHDIPEGIMTKCPSCRTIMYTKELKKNLYVCDSCGFHHRMNAFDRIESLLDPGTFVELDKGMTTEDPLSFPTYREKVEADRKKTNLNEAIVTGEGTMNGFPLVIGVMDARFRMGSMGSVVGEKITRAIERAIENKQPFLLFSASGGARMQEGVLSLMQMAKTSAALERLDRVGGLFISVMTHPTTGGVSASFASLGDYNFAEPGALIGFAGRRIIEQTIREELPNDFQTAEFLLKHGQLDRVIPRSEMKDTLTKILDIHHVS.

The CoA carboxyltransferase N-terminal domain maps to 28–282 (IMTKCPSCRT…TKILDIHHVS (255 aa)). Residues C32, C35, C51, and C54 each coordinate Zn(2+). The C4-type zinc finger occupies 32 to 54 (CPSCRTIMYTKELKKNLYVCDSC).

The protein belongs to the AccD/PCCB family. In terms of assembly, acetyl-CoA carboxylase is a heterohexamer composed of biotin carboxyl carrier protein (AccB), biotin carboxylase (AccC) and two subunits each of ACCase subunit alpha (AccA) and ACCase subunit beta (AccD). The cofactor is Zn(2+).

It is found in the cytoplasm. It carries out the reaction N(6)-carboxybiotinyl-L-lysyl-[protein] + acetyl-CoA = N(6)-biotinyl-L-lysyl-[protein] + malonyl-CoA. It functions in the pathway lipid metabolism; malonyl-CoA biosynthesis; malonyl-CoA from acetyl-CoA: step 1/1. Component of the acetyl coenzyme A carboxylase (ACC) complex. Biotin carboxylase (BC) catalyzes the carboxylation of biotin on its carrier protein (BCCP) and then the CO(2) group is transferred by the transcarboxylase to acetyl-CoA to form malonyl-CoA. The protein is Acetyl-coenzyme A carboxylase carboxyl transferase subunit beta of Halalkalibacterium halodurans (strain ATCC BAA-125 / DSM 18197 / FERM 7344 / JCM 9153 / C-125) (Bacillus halodurans).